Consider the following 443-residue polypeptide: ATP-dependent protease ATPase subunit HslU (443 aa).

ATP is bound by residues I20, 62–67, D255, E321, and R393; that span reads GVGKTE.

This sequence belongs to the ClpX chaperone family. HslU subfamily. As to quaternary structure, a double ring-shaped homohexamer of HslV is capped on each side by a ring-shaped HslU homohexamer. The assembly of the HslU/HslV complex is dependent on binding of ATP.

It is found in the cytoplasm. Functionally, ATPase subunit of a proteasome-like degradation complex; this subunit has chaperone activity. The binding of ATP and its subsequent hydrolysis by HslU are essential for unfolding of protein substrates subsequently hydrolyzed by HslV. HslU recognizes the N-terminal part of its protein substrates and unfolds these before they are guided to HslV for hydrolysis. In Helicobacter acinonychis (strain Sheeba), this protein is ATP-dependent protease ATPase subunit HslU.